The following is a 135-amino-acid chain: UPF0299 membrane protein Spro_1570 (135 aa).

4 helical membrane passes run 4 to 24 (LFTLCWKYLRAIVLIYLCLFA), 30 to 50 (ALLPIAIPGSIIGMLLLFALL), 63 to 83 (GCHLLIRYMVLLFVPIGVGVM), and 93 to 113 (LGPLVVSCIISTLMVLVVVGY).

Belongs to the UPF0299 family.

It localises to the cell inner membrane. The polypeptide is UPF0299 membrane protein Spro_1570 (Serratia proteamaculans (strain 568)).